A 459-amino-acid chain; its full sequence is UDP-N-acetylmuramoylalanine--D-glutamate ligase (459 aa).

An ATP-binding site is contributed by 118–124; that stretch reads GTNGKTT.

It belongs to the MurCDEF family.

It is found in the cytoplasm. It catalyses the reaction UDP-N-acetyl-alpha-D-muramoyl-L-alanine + D-glutamate + ATP = UDP-N-acetyl-alpha-D-muramoyl-L-alanyl-D-glutamate + ADP + phosphate + H(+). It functions in the pathway cell wall biogenesis; peptidoglycan biosynthesis. Cell wall formation. Catalyzes the addition of glutamate to the nucleotide precursor UDP-N-acetylmuramoyl-L-alanine (UMA). This Desulfosudis oleivorans (strain DSM 6200 / JCM 39069 / Hxd3) (Desulfococcus oleovorans) protein is UDP-N-acetylmuramoylalanine--D-glutamate ligase.